The sequence spans 171 residues: Cardioactive peptide (171 aa).

An N-terminal signal peptide occupies residues 1–26 (MQMYHVVLGCSLAILLVILDIPQASC). The propeptide occupies 27 to 49 (DDVVIQKRQVDPAEMDRLLDPKR). Cysteines 54 and 60 form a disulfide. A Cysteine amide modification is found at Cys60. The propeptide occupies 64-171 (RSDESMGTLV…QEEITKPWSR (108 aa)). Residues 116–171 (QSNQFGAGMDRPLPLPIAGYRRKRFADPESQAPAPHSNLPRATSQLQEEITKPWSR) are disordered.

As to expression, central nervous system; most neurons exhibit coexpression with burs.

It is found in the secreted. Functionally, cardioregulatory neurohormone that increases heart beat rate during adult wing inflation; has no effect on beat amplitude. The effect of CCAP is both ino- and chronotropic. The chain is Cardioactive peptide from Periplaneta americana (American cockroach).